Consider the following 159-residue polypeptide: Nucleotide-binding protein PSPPH_4093 (159 aa).

Belongs to the YajQ family.

Nucleotide-binding protein. In Pseudomonas savastanoi pv. phaseolicola (strain 1448A / Race 6) (Pseudomonas syringae pv. phaseolicola (strain 1448A / Race 6)), this protein is Nucleotide-binding protein PSPPH_4093.